A 142-amino-acid chain; its full sequence is MTNYVKKVSIEDFGCQFLHTAHWNNRLRTTGGRFFPNDRHLDFNPKIYREFGIDIFRKIVRHELCHYHLYIQGKGYQHRDKAFKELLEKVDGLRYTPRVTAVKVNYHHYSCQSCGQVYRRRRRVNLRKFACGYCHGRLIESF.

A SprT-like domain is found at 4 to 138 (YVKKVSIEDF…FACGYCHGRL (135 aa)). His62 provides a ligand contact to Zn(2+). The active site involves Glu63. Position 66 (His66) interacts with Zn(2+).

Belongs to the SprT family. Requires Zn(2+) as cofactor.

It localises to the cytoplasm. This chain is Protein SprT-like, found in Streptococcus agalactiae serotype Ia (strain ATCC 27591 / A909 / CDC SS700).